We begin with the raw amino-acid sequence, 304 residues long: Lipoprotein signal peptidase (304 aa).

Helical transmembrane passes span 28–48, 86–106, and 112–132; these read IKIK…IVFV, PAVP…TFIF, and LIVL…DRSV. Residues Asp148 and Asp163 contribute to the active site. Residues 163–183 traverse the membrane as a helical segment; it reads DICIVTGFALIFLTFVVDIFL.

Belongs to the peptidase A8 family.

The protein resides in the cell membrane. It catalyses the reaction Release of signal peptides from bacterial membrane prolipoproteins. Hydrolyzes -Xaa-Yaa-Zaa-|-(S,diacylglyceryl)Cys-, in which Xaa is hydrophobic (preferably Leu), and Yaa (Ala or Ser) and Zaa (Gly or Ala) have small, neutral side chains.. It participates in protein modification; lipoprotein biosynthesis (signal peptide cleavage). Its function is as follows. This protein specifically catalyzes the removal of signal peptides from prolipoproteins. In Mycoplasmoides gallisepticum (strain R(low / passage 15 / clone 2)) (Mycoplasma gallisepticum), this protein is Lipoprotein signal peptidase.